The chain runs to 194 residues: SRP-independent targeting protein 3 homolog (194 aa).

The next 2 helical transmembrane spans lie at 43–63 (ILYATVNIVQIGIFLYTKIII) and 110–130 (LVTIATTLFMHLYMGYAPPLL).

The protein belongs to the PHO88 family.

The protein resides in the endoplasmic reticulum membrane. In terms of biological role, may function in a SRP (signal recognition particle) and GET (guided entry of tail-anchored proteins) independent pathway for targeting a broad range of substrate proteins to the endoplasmic reticulum. Involved in inorganic phosphate uptake. Also involved in telomere length regulation and maintenance. This is SRP-independent targeting protein 3 homolog from Schizosaccharomyces pombe (strain 972 / ATCC 24843) (Fission yeast).